The following is a 127-amino-acid chain: Protein ApaG (127 aa).

The ApaG domain occupies 3–127 (KTSIPDFQIT…FYLIAPLALH (125 aa)).

This Bdellovibrio bacteriovorus (strain ATCC 15356 / DSM 50701 / NCIMB 9529 / HD100) protein is Protein ApaG.